We begin with the raw amino-acid sequence, 1102 residues long: MELENYKQPVVLREDNCRRRRRMKPRSAAASLSSMELIPIEFVLPTSQRKCKSPETALLHVAGHGNVEQMKAQVWLRALETSVAADFYHRLGPHHFLLLYQKKGQWYEIYDKYQVVQTLDCLRYWKATHRSPGQIHLVQRHPPSEESQAFQRQLTALIGYDVTDVSNVHDDELEFTRRGLVTPRMAEVASRDPKLYAMHPWVTSKPLPEYLWKKIANNCIFIVIHRSTTSQTIKVSPDDTPGAILQSFFTKMAKKKSLMDIPESQSEQDFVLRVCGRDEYLVGETPIKNFQWVRHCLKNGEEIHVVLDTPPDPALDEVRKEEWPLVDDCTGVTGYHEQLTIHGKDHESVFTVSLWDCDRKFRVKIRGIDIPVLPRNTDLTVFVEANIQHGQQVLCQRRTSPKPFTEEVLWNVWLEFSIKIKDLPKGALLNLQIYCGKAPALSSKASAESPSSESKGKVQLLYYVNLLLIDHRFLLRRGEYVLHMWQISGKGEDQGSFNADKLTSATNPDKENSMSISILLDNYCHPIALPKHQPTPDPEGDRVRAEMPNQLRKQLEAIIATDPLNPLTAEDKELLWHFRYESLKHPKAYPKLFSSVKWGQQEIVAKTYQLLARREVWDQSALDVGLTMQLLDCNFSDENVRAIAVQKLESLEDDDVLHYLLQLVQAVKFEPYHDSALARFLLKRGLRNKRIGHFLFWFLRSEIAQSRHYQQRFAVILEAYLRGCGTAMLHDFTQQVQVIEMLQKVTLDIKSLSAEKYDVSSQVISQLKQKLENLQNSQLPESFRVPYDPGLKAGALAIEKCKVMASKKKPLWLEFKCADPTALSNETIGIIFKHGDDLRQDMLILQILRIMESIWETESLDLCLLPYGCISTGDKIGMIEIVKDATTIAKIQQSTVGNTGAFKDEVLNHWLKEKSPTEEKFQAAVERFVYSCAGYCVATFVLGIGDRHNDNIMITETGNLFHIDFGHILGNYKSFLGINKERVPFVLTPDFLFVMGTSGKKTSPHFQKFQDICVKAYLALRHHTNLLIILFSMMLMTGMPQLTSKEDIEYIRDALTVGKNEEDAKKYFLDQIEVCRDKGWTVQFNWFLHLVLGIKQGEKHSA.

The region spanning 34 to 141 (SMELIPIEFV…PGQIHLVQRH (108 aa)) is the PI3K-ABD domain. In terms of domain architecture, PI3K-RBD spans 217–309 (NNCIFIVIHR…GEEIHVVLDT (93 aa)). The C2 PI3K-type domain maps to 357 to 521 (CDRKFRVKIR…NSMSISILLD (165 aa)). Residues 541 to 723 (DRVRAEMPNQ…AVILEAYLRG (183 aa)) form the PIK helical domain. The PI3K/PI4K catalytic domain occupies 797-1080 (AIEKCKVMAS…QIEVCRDKGW (284 aa)). Residues 803–809 (VMASKKK) form a G-loop region. Residues 829–838 (GIIFKHGDDL) and 864–872 (LLPYGCIST) each bind ATP. The segment at 943-951 (GIGDRHNDN) is catalytic loop. Residue 961-969 (FHIDFGHIL) participates in ATP binding. The segment at 962–988 (HIDFGHILGNYKSFLGINKERVPFVLT) is activation loop. Position 1024 is a phosphothreonine; by PKA (Thr1024). Position 1101 is a phosphoserine; by autocatalysis (Ser1101).

The protein belongs to the PI3/PI4-kinase family. Heterodimer of a catalytic subunit PIK3CG and a PIK3R5 or PIK3R6 regulatory subunit. Interacts with GRK2 through the PIK helical domain. Interaction with GRK2 is required for targeting to agonist-occupied receptor. Interacts with PDE3B; regulates PDE3B activity and thereby cAMP levels in cells. Interacts with TPM2. Interacts with EPHA8; regulates integrin-mediated cell adhesion to substrate. Interacts with HRAS; the interaction is required for membrane recruitment and beta-gamma G protein dimer-dependent activation of the PI3K gamma complex PIK3CG:PIK3R6. Autophosphorylation at Ser-1101 has no effect on the phosphatidylinositol-4,5-bisphosphate 3-kinase activity. Pancreas, skeletal muscle, liver and heart.

The protein resides in the cytoplasm. The protein localises to the cell membrane. The catalysed reaction is a 1,2-diacyl-sn-glycero-3-phospho-(1D-myo-inositol) + ATP = a 1,2-diacyl-sn-glycero-3-phospho-(1D-myo-inositol-3-phosphate) + ADP + H(+). The enzyme catalyses a 1,2-diacyl-sn-glycero-3-phospho-(1D-myo-inositol-4,5-bisphosphate) + ATP = a 1,2-diacyl-sn-glycero-3-phospho-(1D-myo-inositol-3,4,5-trisphosphate) + ADP + H(+). It carries out the reaction a 1,2-diacyl-sn-glycero-3-phospho-(1D-myo-inositol 4-phosphate) + ATP = a 1,2-diacyl-sn-glycero-3-phospho-(1D-myo-inositol-3,4-bisphosphate) + ADP + H(+). It catalyses the reaction L-seryl-[protein] + ATP = O-phospho-L-seryl-[protein] + ADP + H(+). It functions in the pathway phospholipid metabolism; phosphatidylinositol phosphate biosynthesis. With respect to regulation, activated by both the alpha and the beta-gamma G proteins following stimulation of G protein-coupled receptors (GPCRs). Activation by GPCRs is assisted by the regulatory subunits (PIK3R5 or PIK3R6) leading to the translocation from the cytosol to the plasma membrane and to kinase activation. Inhibited by AS-604850 and AS-605240. In terms of biological role, phosphoinositide-3-kinase (PI3K) that phosphorylates PtdIns(4,5)P2 (Phosphatidylinositol 4,5-bisphosphate) to generate phosphatidylinositol 3,4,5-trisphosphate (PIP3). PIP3 plays a key role by recruiting PH domain-containing proteins to the membrane, including AKT1 and PDPK1, activating signaling cascades involved in cell growth, survival, proliferation, motility and morphology. Links G-protein coupled receptor activation to PIP3 production. Involved in immune, inflammatory and allergic responses. Modulates leukocyte chemotaxis to inflammatory sites and in response to chemoattractant agents. May control leukocyte polarization and migration by regulating the spatial accumulation of PIP3 and by regulating the organization of F-actin formation and integrin-based adhesion at the leading edge. Controls motility of dendritic cells. Together with PIK3CD is involved in natural killer (NK) cell development and migration towards the sites of inflammation. Participates in T-lymphocyte migration. Regulates T-lymphocyte proliferation, activation, and cytokine production. Together with PIK3CD participates in T-lymphocyte development. Required for B-lymphocyte development and signaling. Together with PIK3CD participates in neutrophil respiratory burst. Together with PIK3CD is involved in neutrophil chemotaxis and extravasation. Together with PIK3CB promotes platelet aggregation and thrombosis. Regulates alpha-IIb/beta-3 integrins (ITGA2B/ ITGB3) adhesive function in platelets downstream of P2Y12 through a lipid kinase activity-independent mechanism. May have also a lipid kinase activity-dependent function in platelet aggregation. Involved in endothelial progenitor cell migration. Negative regulator of cardiac contractility. Modulates cardiac contractility by anchoring protein kinase A (PKA) and PDE3B activation, reducing cAMP levels. Regulates cardiac contractility also by promoting beta-adrenergic receptor internalization by binding to GRK2 and by non-muscle tropomyosin phosphorylation. Also has serine/threonine protein kinase activity: both lipid and protein kinase activities are required for beta-adrenergic receptor endocytosis. May also have a scaffolding role in modulating cardiac contractility. Contributes to cardiac hypertrophy under pathological stress. Through simultaneous binding of PDE3B to RAPGEF3 and PIK3R6 is assembled in a signaling complex in which the PI3K gamma complex is activated by RAPGEF3 and which is involved in angiogenesis. In neutrophils, participates in a phospholipase C-activating N-formyl peptide-activated GPCR (G protein-coupled receptor) signaling pathway downstream of RASGRP4-mediated Ras-activation, to promote neutrophil functional responses. The polypeptide is Phosphatidylinositol 4,5-bisphosphate 3-kinase catalytic subunit gamma isoform (PIK3CG) (Homo sapiens (Human)).